A 1615-amino-acid chain; its full sequence is Mediator of RNA polymerase II transcription subunit 23 (1615 aa).

Disordered stretches follow at residues 40-67 (RQKPDESLRDPPNKSQKRVHAPNRDLPP) and 1230-1270 (SSSS…NASE). A compositionally biased stretch (basic and acidic residues) spans 41–51 (QKPDESLRDPP). The span at 1230-1241 (SSSSNCSSRSGS) shows a compositional bias: low complexity.

It belongs to the Mediator complex subunit 23 family. In terms of assembly, component of the Mediator complex.

Its subcellular location is the nucleus. Functionally, component of the Mediator complex, a coactivator involved in the regulated transcription of nearly all RNA polymerase II-dependent genes. Mediator functions as a bridge to convey information from gene-specific regulatory proteins to the basal RNA polymerase II transcription machinery. The Mediator complex, having a compact conformation in its free form, is recruited to promoters by direct interactions with regulatory proteins and serves for the assembly of a functional preinitiation complex with RNA polymerase II and the general transcription factors. The chain is Mediator of RNA polymerase II transcription subunit 23 (MED23) from Arabidopsis thaliana (Mouse-ear cress).